The primary structure comprises 404 residues: Glucoside xylosyltransferase 1 (404 aa).

Topologically, residues 1-6 (MRRYLR) are cytoplasmic. Residues 7-29 (VVGLCLACGFCSLLYAFSQLAVS) traverse the membrane as a helical; Signal-anchor for type II membrane protein segment. Topologically, residues 30–404 (LEEGAAGGRR…NRYDTPPKER (375 aa)) are lumenal. Asn201 is a glycosylation site (N-linked (GlcNAc...) asparagine).

Belongs to the glycosyltransferase 8 family.

The protein localises to the membrane. The catalysed reaction is 3-O-(beta-D-glucosyl)-L-seryl-[EGF-like domain protein] + UDP-alpha-D-xylose = 3-O-[alpha-D-xylosyl-(1-&gt;3)-beta-D-glucosyl]-L-seryl-[EGF-like domain protein] + UDP + H(+). In terms of biological role, glycosyltransferase which elongates the O-linked glucose attached to EGF-like repeats in the extracellular domain of Notch proteins by catalyzing the addition of xylose. The sequence is that of Glucoside xylosyltransferase 1 (Gxylt1) from Mus musculus (Mouse).